Reading from the N-terminus, the 666-residue chain is MDRPALPKSIKDKTNPWGPIILGILIMLGGALGKGSPHKVFNLTWEVYNQEYETVWATSGSHPLWTWWPTLTPDLCMLAQLAKPSWGLSDYPPYSKPPGPPCCTTDNNPPGCSRDCNGPLTYLTPRCSTAWNRLKLVLTTHHLNQGFYVCPGPHRPRHARNCGGPDDFYCAHWGCETTGQAYWKPSSSWDYIRVSNNASSSDATTACKNNNWCSPLAISFTDPGKRATSWTSGFTWGLRLYISGHPGLIFGVRLKISDLGPRVPIGPNPVLSEQRPPSQPEPARLPPSSNLTQGGTPSAPTGPPQEGTGDRLLDLVQGAYQALNATSPDKTQECWLCLVSSPPYYEGVAVVGPYSNHTTAPANCSADSQHKLTLSEVTGKPLPRKGSQDPPGPVQYHSGARQKYSLSGGSRGTMWACNTGLTPCLSTAVLNLTTDYCVLVELWPRVTYHSLDFVYRQVEGRTRYQREPVSLTLALLLGGLTMGGIAAGVGTGTSALVKTQQFEQLHAAIQADLKEVESSITNLEKSLTSLSEVVLQNRRGLDLLFLEKGGLCAALKEECCFYADHTGLVRDSMAKLRERLNQRQKLFEAGQGWFEGLFNRSPWLTTLISTIMGPLIILLLILMFGPCILNRLVQFVKDRISVVQALVLTQQYHQLKPLEHGRAIVK.

Residues 1–33 (MDRPALPKSIKDKTNPWGPIILGILIMLGGALG) form the signal peptide. Positions 31-264 (ALGKGSPHKV…KISDLGPRVP (234 aa)) are receptor-binding domain (RBD). Residues 34–607 (KGSPHKVFNL…FNRSPWLTTL (574 aa)) are Extracellular-facing. The N-linked (GlcNAc...) asparagine; by host glycan is linked to Asn-42. 5 cysteine pairs are disulfide-bonded: Cys-76-Cys-127, Cys-102-Cys-116, Cys-103-Cys-112, Cys-150-Cys-170, and Cys-162-Cys-175. Asp-115 lines the Zn(2+) pocket. The N-linked (GlcNAc...) asparagine; by host glycan is linked to Asn-197. The cysteines at positions 207 and 213 are disulfide-linked. The interval 265-310 (IGPNPVLSEQRPPSQPEPARLPPSSNLTQGGTPSAPTGPPQEGTGD) is disordered. The segment covering 287-299 (PSSNLTQGGTPSA) has biased composition (polar residues). Asn-290 and Asn-324 each carry an N-linked (GlcNAc...) asparagine; by host glycan. Intrachain disulfides connect Cys-334–Cys-337, Cys-334–Cys-560, Cys-364–Cys-417, Cys-424–Cys-437, and Cys-552–Cys-560. Residues 334 to 337 (CWLC) carry the CXXC motif. 2 N-linked (GlcNAc...) asparagine; by host glycosylation sites follow: Asn-356 and Asn-363. The interval 378–399 (TGKPLPRKGSQDPPGPVQYHSG) is disordered. An N-linked (GlcNAc...) asparagine; by host glycan is attached at Asn-431. Positions 469 to 489 (VSLTLALLLGGLTMGGIAAGV) are fusion peptide. Residues 500–534 (QQFEQLHAAIQADLKEVESSITNLEKSLTSLSEVV) adopt a coiled-coil conformation. The tract at residues 535–551 (LQNRRGLDLLFLEKGGL) is immunosuppression. Positions 552–560 (CAALKEECC) match the CX6CC motif. The chain crosses the membrane as a helical span at residues 608–628 (ISTIMGPLIILLLILMFGPCI). A lipid anchor (S-palmitoyl cysteine; by host) is attached at Cys-627. At 629 to 666 (LNRLVQFVKDRISVVQALVLTQQYHQLKPLEHGRAIVK) the chain is on the cytoplasmic side. The short motif at 652-655 (YHQL) is the YXXL motif; contains endocytosis signal element.

In terms of assembly, the mature envelope protein (Env) consists of a trimer of SU-TM heterodimers attached by a labile interchain disulfide bond. Specific enzymatic cleavages in vivo yield mature proteins. Envelope glycoproteins are synthesized as an inactive precursor that is N-glycosylated and processed likely by host cell furin or by a furin-like protease in the Golgi to yield the mature SU and TM proteins. The cleavage site between SU and TM requires the minimal sequence [KR]-X-[KR]-R. The R-peptide is released from the C-terminus of the cytoplasmic tail of the TM protein upon particle formation as a result of proteolytic cleavage by the viral protease. Cleavage of this peptide is required for TM to become fusogenic. Post-translationally, the CXXC motif is highly conserved across a broad range of retroviral envelope proteins. It is thought to participate in the formation of a labile disulfide bond possibly with the CX6CC motif present in the transmembrane protein. Isomerization of the intersubunit disulfide bond to an SU intrachain disulfide bond is thought to occur upon receptor recognition in order to allow membrane fusion. In terms of processing, the transmembrane protein is palmitoylated. The R-peptide is palmitoylated.

It localises to the virion membrane. The protein localises to the host cell membrane. Its function is as follows. The surface protein (SU) attaches the virus to the host cell by binding to its receptor. This interaction triggers the refolding of the transmembrane protein (TM) and is thought to activate its fusogenic potential by unmasking its fusion peptide. Fusion occurs at the host cell plasma membrane. In terms of biological role, the transmembrane protein (TM) acts as a class I viral fusion protein. Under the current model, the protein has at least 3 conformational states: pre-fusion native state, pre-hairpin intermediate state, and post-fusion hairpin state. During viral and target cell membrane fusion, the coiled coil regions (heptad repeats) assume a trimer-of-hairpins structure, positioning the fusion peptide in close proximity to the C-terminal region of the ectodomain. The formation of this structure appears to drive apposition and subsequent fusion of viral and target cell membranes. Membranes fusion leads to delivery of the nucleocapsid into the cytoplasm. In Hortulanus murine leukemia virus (HoMuLV), this protein is Envelope glycoprotein (env).